A 475-amino-acid polypeptide reads, in one-letter code: Ribulose bisphosphate carboxylase large chain (475 aa).

The propeptide occupies 1–2 (MS). Position 3 is an N-acetylproline (Pro-3). Lys-14 carries the post-translational modification N6,N6,N6-trimethyllysine. Lys-175 serves as the catalytic Proton acceptor. D-ribulose 1,5-bisphosphate contacts are provided by Lys-175 and Lys-177. Residues Lys-201, Asp-203, and Glu-204 each contribute to the Mg(2+) site. Lys-201 is modified (N6-carboxylysine). Residue Glu-204 participates in D-ribulose 1,5-bisphosphate binding. The active-site Proton acceptor is His-294. Arg-295, His-327, Lys-334, Ser-379, Gly-381, Gly-403, and Gly-404 together coordinate D-ribulose 1,5-bisphosphate.

This sequence belongs to the RuBisCO large chain family. Type I subfamily. As to quaternary structure, heterohexadecamer of 8 large chains and 8 small chains. Heterohexadecamer; disulfide-linked. The disulfide link is formed within the large subunit homodimers. It depends on Mg(2+) as a cofactor. In terms of processing, the disulfide bond which can form in the large chain dimeric partners within the hexadecamer appears to be associated with oxidative stress and protein turnover.

It localises to the plastid. The protein localises to the chloroplast. It catalyses the reaction 2 (2R)-3-phosphoglycerate + 2 H(+) = D-ribulose 1,5-bisphosphate + CO2 + H2O. It carries out the reaction D-ribulose 1,5-bisphosphate + O2 = 2-phosphoglycolate + (2R)-3-phosphoglycerate + 2 H(+). Its function is as follows. RuBisCO catalyzes two reactions: the carboxylation of D-ribulose 1,5-bisphosphate, the primary event in carbon dioxide fixation, as well as the oxidative fragmentation of the pentose substrate in the photorespiration process. Both reactions occur simultaneously and in competition at the same active site. Binds to abscisic acid (ABA); only half of the possible binding sites are occupied in the crystal and there are indications this is a low affinity site. The chain is Ribulose bisphosphate carboxylase large chain from Pisum sativum (Garden pea).